We begin with the raw amino-acid sequence, 351 residues long: Protein TBATA (351 aa).

Disordered regions lie at residues 16–40 (KAELKLEKKSGRKPRSPRDSGPQKE), 167–186 (KKEKEQKEEPLREQGAKYSA), 195–216 (STRAVGRRRSHQGQQSQSSSRH), and 292–351 (EVHE…RAES). Positions 167–181 (KKEKEQKEEPLREQG) are enriched in basic and acidic residues. Basic and acidic residues-rich tracts occupy residues 292–302 (EVHEPPQEKQE) and 340–351 (TEKKTSKPRAES).

The protein belongs to the TBATA family.

The protein localises to the cytoplasm. The protein resides in the cytosol. Its function is as follows. May play a role in spermatid differentiation. Modulates thymic stromal cell proliferation and thymus function. This is Protein TBATA (TBATA) from Homo sapiens (Human).